The chain runs to 197 residues: TATA-box-binding protein (197 aa).

2 consecutive repeat copies span residues 14 to 90 (IENI…IKTL) and 105 to 181 (IQNI…FDKL).

Belongs to the TBP family.

Its function is as follows. General factor that plays a role in the activation of archaeal genes transcribed by RNA polymerase. Binds specifically to the TATA box promoter element which lies close to the position of transcription initiation. The sequence is that of TATA-box-binding protein (tbp) from Sulfolobus acidocaldarius (strain ATCC 33909 / DSM 639 / JCM 8929 / NBRC 15157 / NCIMB 11770).